The following is a 612-amino-acid chain: UvrABC system protein C (612 aa).

One can recognise a GIY-YIG domain in the interval 11 to 90 (TASGVYLMKG…IKKYRPRYNI (80 aa)). Positions 200-235 (SEVVESLQHQMAAAAERMAFEEAARLRDQLRAIEQT) constitute a UVR domain.

This sequence belongs to the UvrC family. In terms of assembly, interacts with UvrB in an incision complex.

It is found in the cytoplasm. The UvrABC repair system catalyzes the recognition and processing of DNA lesions. UvrC both incises the 5' and 3' sides of the lesion. The N-terminal half is responsible for the 3' incision and the C-terminal half is responsible for the 5' incision. This Syntrophotalea carbinolica (strain DSM 2380 / NBRC 103641 / GraBd1) (Pelobacter carbinolicus) protein is UvrABC system protein C.